Consider the following 68-residue polypeptide: Serine rich endogenous peptide 13 (68 aa).

The first 31 residues, 1–31 (MATKASNLVVFLLSLLLLFLLISFQVGVADA), serve as a signal peptide directing secretion. The tract at residues 33-68 (RNKRQGQEQRVDYDYPRPPTAPIYLPPSKSRKGKGP) is disordered. Residues 37-47 (QGQEQRVDYDY) are compositionally biased toward basic and acidic residues. Residues 48-57 (PRPPTAPIYL) are compositionally biased toward pro residues. The short motif at 54 to 68 (PIYLPPSKSRKGKGP) is the SCOOP motif element. The short motif at 60-62 (SKS) is the SxS motif essential for MIK2 binding element.

It belongs to the serine rich endogenous peptide (SCOOP) phytocytokine family. In terms of assembly, interacts with MIK2 (via extracellular leucine-rich repeat domain); this interaction triggers the formation of complex between MIK2 and the BAK1/SERK3 and SERK4 coreceptors, and subsequent BAK1 activation by phosphorylation. As to expression, mostly expressed in stems and flowers and, to a lower extent, in seedlings shoots, roots, siliques, seeds and leaves.

The protein resides in the cell membrane. It localises to the secreted. Its subcellular location is the extracellular space. The protein localises to the apoplast. Its function is as follows. Brassicaceae-specific phytocytokine (plant endogenous peptide released into the apoplast) perceived by MIK2 in a BAK1/SERK3 and SERK4 coreceptors-dependent manner, that modulates various physiological and antimicrobial processes including growth prevention and reactive oxygen species (ROS) response regulation. Promotes the expression of immune-related marker genes (e.g. WRKY30, WRKY33 and CYP81F2) in a MIK2-dependent manner. Inhibits root growth and regulates root meristems. Prevents general growth and development. Exhibits antibacterial effects against Pseudomonas syringae pv. tomato DC3000, Ralstonia solanacearum, Bacillus subtilis and Agrobacterium tumefaciens, thus being an antimicrobial peptide (AMP). This Arabidopsis thaliana (Mouse-ear cress) protein is Serine rich endogenous peptide 13.